A 51-amino-acid polypeptide reads, in one-letter code: Lantibiotic lacticin-481 (51 aa).

Positions 1–24 are excised as a propeptide; sequence MKEQNSFNLLQEVTESELDLILGA. Positions 33–38 form a cross-link, beta-methyllanthionine (Thr-Cys); it reads TISHEC. 2 cross-links (lanthionine (Ser-Cys)) span residues 35–49 and 42–50; these read SHEC…VFTC and SWQFVFTCC. Position 48 is a (Z)-2,3-didehydrobutyrine (T48).

Belongs to the type A lantibiotic family. Monomer or homodimer. Maturation of lantibiotics involves the enzymatic conversion of Thr, and Ser into dehydrated AA and the formation of thioether bonds with cysteine. This is followed by membrane translocation and cleavage of the modified precursor. In terms of processing, it is established that the 2,3-didehydrobutyrine is the Z-isomer.

Its function is as follows. Lanthionine-containing peptide antibiotic (lantibiotic) active on Gram-positive bacteria. The bactericidal activity of lantibiotics is based on depolarization of energized bacterial cytoplasmic membranes, initiated by the formation of aqueous transmembrane pores. Lacticin 481 is a broad spectrum bacteriocin exhibiting activity against a wide range of lactic acid bacteria and C.tyrobutyricum. This is Lantibiotic lacticin-481 (lctA) from Lactococcus lactis subsp. lactis (Streptococcus lactis).